The sequence spans 238 residues: Endo-chitosanase (238 aa).

The signal sequence occupies residues 1-17 (MRLSEILTVALVTGATA). N-linked (GlcNAc...) asparagine glycosylation is present at Asn-83.

The protein belongs to the glycosyl hydrolase 75 family.

It is found in the secreted. It carries out the reaction Endohydrolysis of beta-(1-&gt;4)-linkages between D-glucosamine residues in a partly acetylated chitosan.. Functionally, chitosanase catalyzing the endo-type cleavage of chitosan, the deacylated form of chitin. Chitosanase may be crucial in the degradation of the deacetylated portion of chitin in the fungal cell wall. Chitoolisaccharides produced by the hydrolysis of partially N-acetylated chitosan are known to have many biological activities, including antibacterial activity, immune-enhancing effects, and elicitor activity. The chitosans with higher degrees of deacetylation were shown to be the better substrates. Chitodimer, chitotrimer, and chitotetramer are the major products but monoacetyl chitodimer, monoacetyl chitotrimer, and monoacetyl chitotetramer are also produced. This chain is Endo-chitosanase (csn), found in Aspergillus fumigatus (Neosartorya fumigata).